The chain runs to 236 residues: MATTHLDVCAVVPAAGFGRRMQTECPKQYLSIGNQTILEHSVHALLAHPRVKRVVIAISPGDSRFAQLPLANHPQITVVDGGDERADSVLAGLKAAGDAQWVLVHDAARPCLHQDDLARLLTLSETSRTGGILAAPVRDTMKRAEPGKNAIAHTVDRNGLWHALTPQFFPRELLHDCLTRALNEGATITDEASALEYCGFHPQLVEGRADNIKVTRPEDLALAEFYLTRTIHQENT.

The protein belongs to the IspD/TarI cytidylyltransferase family. IspD subfamily. In terms of assembly, homodimer.

It catalyses the reaction 2-C-methyl-D-erythritol 4-phosphate + CTP + H(+) = 4-CDP-2-C-methyl-D-erythritol + diphosphate. The protein operates within isoprenoid biosynthesis; isopentenyl diphosphate biosynthesis via DXP pathway; isopentenyl diphosphate from 1-deoxy-D-xylulose 5-phosphate: step 2/6. Its function is as follows. Catalyzes the formation of 4-diphosphocytidyl-2-C-methyl-D-erythritol from CTP and 2-C-methyl-D-erythritol 4-phosphate (MEP). The chain is 2-C-methyl-D-erythritol 4-phosphate cytidylyltransferase from Escherichia coli O17:K52:H18 (strain UMN026 / ExPEC).